Here is a 179-residue protein sequence, read N- to C-terminus: Pyridoxal 5'-phosphate synthase subunit PdxT (179 aa).

48–50 is an L-glutamine binding site; that stretch reads GES. Residue Cys79 is the Nucleophile of the active site. L-glutamine-binding positions include Arg101 and 127-128; that span reads IR. Active-site charge relay system residues include His163 and Glu165.

Belongs to the glutaminase PdxT/SNO family. As to quaternary structure, in the presence of PdxS, forms a dodecamer of heterodimers. Only shows activity in the heterodimer.

The enzyme catalyses aldehydo-D-ribose 5-phosphate + D-glyceraldehyde 3-phosphate + L-glutamine = pyridoxal 5'-phosphate + L-glutamate + phosphate + 3 H2O + H(+). It carries out the reaction L-glutamine + H2O = L-glutamate + NH4(+). It functions in the pathway cofactor biosynthesis; pyridoxal 5'-phosphate biosynthesis. Its function is as follows. Catalyzes the hydrolysis of glutamine to glutamate and ammonia as part of the biosynthesis of pyridoxal 5'-phosphate. The resulting ammonia molecule is channeled to the active site of PdxS. The sequence is that of Pyridoxal 5'-phosphate synthase subunit PdxT from Francisella tularensis subsp. holarctica (strain FTNF002-00 / FTA).